Here is a 169-residue protein sequence, read N- to C-terminus: Transmembrane protein B169L (169 aa).

2 helical membrane passes run 28 to 48 (NPFIVALIITAVVLVVFFAIC) and 60 to 80 (TAIYVYICIVALLFLHYYVLN). Residue N88 is glycosylated (N-linked (GlcNAc...) asparagine; by host). Residues 107-169 (DEIIPPISPP…EVIMPSQYNN (63 aa)) are disordered. Residues 144–154 (SKPASSADSKP) are compositionally biased toward low complexity.

Belongs to the asfivirus B169L family.

It localises to the host membrane. It is found in the virion. The protein is Transmembrane protein B169L of Ornithodoros (relapsing fever ticks).